A 118-amino-acid chain; its full sequence is Large ribosomal subunit protein uL18 (118 aa).

The protein belongs to the universal ribosomal protein uL18 family. In terms of assembly, part of the 50S ribosomal subunit; part of the 5S rRNA/L5/L18/L25 subcomplex. Contacts the 5S and 23S rRNAs.

In terms of biological role, this is one of the proteins that bind and probably mediate the attachment of the 5S RNA into the large ribosomal subunit, where it forms part of the central protuberance. This chain is Large ribosomal subunit protein uL18, found in Helicobacter hepaticus (strain ATCC 51449 / 3B1).